The primary structure comprises 74 residues: Small ribosomal subunit protein bS18 (74 aa).

The protein belongs to the bacterial ribosomal protein bS18 family. Part of the 30S ribosomal subunit. Forms a tight heterodimer with protein bS6.

In terms of biological role, binds as a heterodimer with protein bS6 to the central domain of the 16S rRNA, where it helps stabilize the platform of the 30S subunit. The protein is Small ribosomal subunit protein bS18 of Coprothermobacter proteolyticus (strain ATCC 35245 / DSM 5265 / OCM 4 / BT).